We begin with the raw amino-acid sequence, 131 residues long: uncharacterized protein (131 aa).

Transmembrane regions (helical) follow at residues 68–88 and 94–114; these read VVRA…VAPI and VLGA…IVAI.

It localises to the cell membrane. This is an uncharacterized protein from Methanocaldococcus jannaschii (strain ATCC 43067 / DSM 2661 / JAL-1 / JCM 10045 / NBRC 100440) (Methanococcus jannaschii).